Here is a 156-residue protein sequence, read N- to C-terminus: Ribonuclease H (156 aa).

The RNase H type-1 domain occupies Ser2–Ser144. Positions 11, 49, 71, and 136 each coordinate Mg(2+).

The protein belongs to the RNase H family. In terms of assembly, monomer. Requires Mg(2+) as cofactor.

The protein localises to the cytoplasm. The catalysed reaction is Endonucleolytic cleavage to 5'-phosphomonoester.. In terms of biological role, endonuclease that specifically degrades the RNA of RNA-DNA hybrids. The protein is Ribonuclease H of Nitratidesulfovibrio vulgaris (strain ATCC 29579 / DSM 644 / CCUG 34227 / NCIMB 8303 / VKM B-1760 / Hildenborough) (Desulfovibrio vulgaris).